A 460-amino-acid polypeptide reads, in one-letter code: MPAAADTEEEQPMLPLPGAPSSSWAQFCQRFRALFSGADPRVCVAFWLFGLINNVLYVVILSAALDLVGPSVPKGVVLLADVIPSFATKLIAPYFIHMVPYPVRIIIFVFLSAAGMLLVALSPPYTDGGTIATKLAGIVLASLSSGGGELSFVGLTHFYGPFSLAAWGSGTGAAGLVGAGAYALATTSLGLSVKATLLASSCLPAVMVVSFFMVLPRSPLQPISAAYAGYRAVEEREELAEEREFMEGDRDATFDEQERLLGASVLSDQSKKAGWQRFKRDLKRVRGLFFPFMLPLLLVYVAEYTINQGVSPTLLFPLDESPFAHFRAFYPAYNAIYQVGVFISRSSTPFFRIHDLYLPSFLQILNLVLLTLQAVFNFIPSVYIIFIIIFWEGLLGGLVYVNTFAEIGDRVPKEDREFSLGATTVSDAAGICIAGFVSMVFEVWLCDWQVTHGRDYCRRI.

Transmembrane regions (helical) follow at residues valine 42–serine 62, valine 76–isoleucine 96, isoleucine 105–tyrosine 125, leucine 135–leucine 155, leucine 164–leucine 184, alanine 195–leucine 215, glycine 287–asparagine 307, phenylalanine 323–isoleucine 343, leucine 356–phenylalanine 376, phenylalanine 378–leucine 398, and alanine 428–tryptophan 448.

Belongs to the battenin family.

Its subcellular location is the vacuole membrane. In terms of biological role, involved in vacuolar transport and vacuole pH homeostasis. Also required for cytokinesis. This is Protein btn1 (btn1) from Aspergillus fumigatus (strain ATCC MYA-4609 / CBS 101355 / FGSC A1100 / Af293) (Neosartorya fumigata).